The primary structure comprises 900 residues: Peroxisomal hydratase-dehydrogenase-epimerase (900 aa).

2 short-chain dehydrogenase like regions span residues serine 6–serine 230 and serine 319–glutamate 535. Positions 14, 53, 100, 133, 165, and 169 each coordinate NADP(+). Tyrosine 165 acts as the Proton donor in catalysis. The Lowers pKa of active site Tyr role is filled by lysine 169. 8 residues coordinate (3R)-3-hydroxydecanoyl-CoA: histidine 689, glycine 690, lysine 719, aspartate 803, asparagine 805, glycine 826, phenylalanine 851, and threonine 852. Residues glutamate 775–aspartate 887 enclose the MaoC-like domain. A Microbody targeting signal motif is present at residues serine 898 to leucine 900.

Belongs to the short-chain dehydrogenases/reductases (SDR) family. As to quaternary structure, monomer.

It is found in the peroxisome. It catalyses the reaction a (3R)-3-hydroxyacyl-CoA = a (2E)-enoyl-CoA + H2O. The enzyme catalyses a (3R)-3-hydroxyacyl-CoA + NAD(+) = a 3-oxoacyl-CoA + NADH + H(+). The protein operates within lipid metabolism; fatty acid beta-oxidation. Second trifunctional enzyme acting on the beta-oxidation pathway for fatty acids, possessing hydratase-dehydrogenase-epimerase activities. Converts trans-2-enoyl-CoA via D-3-hydroxyacyl-CoA to 3-ketoacyl-CoA. The sequence is that of Peroxisomal hydratase-dehydrogenase-epimerase (FOX2) from Saccharomyces cerevisiae (strain ATCC 204508 / S288c) (Baker's yeast).